A 488-amino-acid polypeptide reads, in one-letter code: Transmembrane protein 39A-B (488 aa).

Residues N31 and N39 are each glycosylated (N-linked (GlcNAc...) asparagine). 3 helical membrane-spanning segments follow: residues 72–92 (GLVF…TQYI), 110–130 (TSLN…VMLA), and 155–175 (LIIG…WTTV). An N-linked (GlcNAc...) asparagine glycan is attached at N180. A helical membrane pass occupies residues 182–202 (SVLNLLFLGYPFGVYVPLCCF). N206 is a glycosylation site (N-linked (GlcNAc...) asparagine). Helical transmembrane passes span 287–307 (EVLF…LCFV), 319–339 (CEHL…QLLP), 420–440 (LLNL…YSLL), and 446–466 (NHTL…FKLL).

This sequence belongs to the TMEM39 family.

It is found in the membrane. In Xenopus laevis (African clawed frog), this protein is Transmembrane protein 39A-B (tmem39a-b).